The following is a 390-amino-acid chain: ATP-sensitive inward rectifier potassium channel 11 (390 aa).

Topologically, residues 1–65 (MLSRKGIIPE…LQDVFTTLVD (65 aa)) are cytoplasmic. ATP contacts are provided by Asn-48 and Arg-50. The chain crosses the membrane as a helical span at residues 66-92 (LKWPHTLLIFTMSFLCSWLLFAMVWWL). Over 93–116 (IAFAHGDLAPGEGTNVPCVTSIHS) the chain is Extracellular. Cys-110 and Cys-142 are disulfide-bonded. The discontinuously helical; Pore-forming intramembrane region spans 117–133 (FSSAFLFSIEVQVTIGF). Thr-130 and Phe-133 together coordinate K(+). The short motif at 130-135 (TIGFGG) is the Selectivity filter element. Topologically, residues 134–142 (GGRMVTEEC) are extracellular. The helical transmembrane segment at 143 to 171 (PLAILILIVQNIVGLMINAIMLGCIFMKT) threads the bilayer. Residues 172-390 (AQAHRRAETL…KFSISPDSLS (219 aa)) are Cytoplasmic-facing. Arg-176 provides a ligand contact to a 1,2-diacyl-sn-glycero-3-phospho-(1D-myo-inositol-4,5-bisphosphate). Tyr-330 is an ATP binding site. Thr-341 carries the post-translational modification Phosphothreonine; by MAPK1. Ser-385 bears the Phosphoserine; by MAPK1 mark.

The protein belongs to the inward rectifier-type potassium channel (TC 1.A.2.1) family. KCNJ11 subfamily. In terms of assembly, homotetramer; the homotetramer binds four ATP molecules (one ATP per subunit). Forms an heterooctamer with ABCC8/SUR1; one KCNJ11 homotetramer interacts with four ABCC8/SUR1 molecules. Interacts with ABCC9/SUR2. Post-translationally, phosphorylation by MAPK1 results in changes in channel gating that destabilize the closed states and reduce the ATP sensitivity.

Its subcellular location is the membrane. It carries out the reaction K(+)(in) = K(+)(out). With respect to regulation, KATP channels are regulated by cytoplasmic ATP/ADP ratios; ATP inhibits the channel by closing the pore, while ADP activates the channel. Activated by phosphatidylinositol 4,5-biphosphate (PtdIns(4,5)P2). Inward rectifier potassium channel that forms the pore of ATP-sensitive potassium channels (KATP), regulating potassium permeability as a function of cytoplasmic ATP and ADP concentrations in many different cells. Inward rectifier potassium channels are characterized by a greater tendency to allow potassium to flow into the cell rather than out of it. Their voltage dependence is regulated by the concentration of extracellular potassium; as external potassium is raised, the voltage range of the channel opening shifts to more positive voltages. The inward rectification is mainly due to the blockage of outward current by internal magnesium. Can be blocked by extracellular barium. In pancreatic cells, it forms KATP channels with ABCC8/SUR1. Can form cardiac and smooth muscle-type KATP channels with ABCC9. This Mus musculus (Mouse) protein is ATP-sensitive inward rectifier potassium channel 11 (Kcnj11).